The chain runs to 389 residues: Chalcone synthase 1 (389 aa).

Cys-164 is an active-site residue.

It belongs to the thiolase-like superfamily. Chalcone/stilbene synthases family.

It carries out the reaction (E)-4-coumaroyl-CoA + 3 malonyl-CoA + 3 H(+) = 2',4,4',6'-tetrahydroxychalcone + 3 CO2 + 4 CoA. The protein operates within secondary metabolite biosynthesis; flavonoid biosynthesis. Its function is as follows. The primary product of this enzyme is 4,2',4',6'-tetrahydroxychalcone (also termed naringenin-chalcone or chalcone) which can under specific conditions spontaneously isomerize into naringenin. This chain is Chalcone synthase 1 (CHS1), found in Daucus carota (Wild carrot).